We begin with the raw amino-acid sequence, 775 residues long: Transcription activator of gluconeogenesis HCBG_00867 (775 aa).

Residues 1–70 are disordered; sequence MTASTQNGSP…NAKDPLRPRR (70 aa). Polar residues-rich tracts occupy residues 21 to 41 and 48 to 60; these read NQES…QSPA and TAES…STAA. Residues 77–105 constitute a DNA-binding region (zn(2)-C6 fungal-type); that stretch reads CFACQRAHLTCGDERPCQRCIKRGLQDAC. Disordered regions lie at residues 179–248, 286–351, 556–592, and 649–725; these read TQAK…PFGA, GAGD…NIYN, NLNV…AGGG, and QGKE…SPKQ. The segment covering 195–217 has biased composition (polar residues); it reads MQDTSINPSAFQAPSPTSTPNFD. The segment covering 218 to 229 has biased composition (low complexity); sequence LSSNPPNRNLSS. 4 stretches are compositionally biased toward polar residues: residues 230-244, 292-323, 334-351, and 557-576; these read AMTQ…QTQD, PSDS…TQSP, WNPS…NIYN, and LNVN…TPRN. Over residues 657–668 the composition is skewed to gly residues; sequence GSDGKGGGGGGD. The span at 669–713 shows a compositional bias: low complexity; sequence VAATAATTSTSTSNGANSSGHANANRNNTNPKNSSPPSSSSAAAA.

This sequence belongs to the ERT1/acuK family.

Its subcellular location is the nucleus. In terms of biological role, transcription factor which regulates nonfermentable carbon utilization. Activator of gluconeogenetic genes. The chain is Transcription activator of gluconeogenesis HCBG_00867 from Ajellomyces capsulatus (strain G186AR / H82 / ATCC MYA-2454 / RMSCC 2432) (Darling's disease fungus).